Reading from the N-terminus, the 305-residue chain is tRNA dimethylallyltransferase (305 aa).

Residue 8–15 (GPTGTGKS) coordinates ATP. 10 to 15 (TGTGKS) provides a ligand contact to substrate.

The protein belongs to the IPP transferase family. In terms of assembly, monomer. Mg(2+) is required as a cofactor.

The catalysed reaction is adenosine(37) in tRNA + dimethylallyl diphosphate = N(6)-dimethylallyladenosine(37) in tRNA + diphosphate. Functionally, catalyzes the transfer of a dimethylallyl group onto the adenine at position 37 in tRNAs that read codons beginning with uridine, leading to the formation of N6-(dimethylallyl)adenosine (i(6)A). The sequence is that of tRNA dimethylallyltransferase from Mycobacterium sp. (strain JLS).